The following is a 444-amino-acid chain: Trimethylamine monooxygenase (444 aa).

FAD contacts are provided by C12, E37, Q39, L45, and W46. Positions 70 and 72 each coordinate NADP(+). FAD-binding residues include N72 and V125. The NADP(+) site is built by Y170, S202, S203, S205, R226, H227, and N288. FAD is bound by residues Q315 and T318. R409 is an NADP(+) binding site.

Belongs to the FMO family. Homodimer. Requires FAD as cofactor.

The catalysed reaction is trimethylamine + NADPH + O2 = trimethylamine N-oxide + NADP(+) + H2O. Catalyzes the oxidation of trimethylamine (TMA) to produce trimethylamine N-oxide (TMAO). In vitro, has a broad substrate specificity, oxidizing many nitrogen- and sulfur-containing compounds, including dimethylamine (DMA), dimethylsulfide (DMS), dimethylsulfoxide (DMSO) and methimazole. TMA shows the highest affinity. This chain is Trimethylamine monooxygenase, found in Pelagibacter sp. (strain HTCC7211).